A 203-amino-acid polypeptide reads, in one-letter code: Glycerol-3-phosphate acyltransferase (203 aa).

5 consecutive transmembrane segments (helical) span residues 4 to 24 (IAPGMIFLAYLCGSISSAILV), 56 to 76 (VAVLVFDVLKGMLPVWGAYML), 80 to 100 (PFWLGLIAIAACVGHIWPVFF), 112 to 132 (FGAIAPIGWDLTGVMAGTWLL), and 138 to 158 (GYSSLGAIVSALIAPFYVWWF).

It belongs to the PlsY family. As to quaternary structure, probably interacts with PlsX.

The protein localises to the cell inner membrane. It catalyses the reaction an acyl phosphate + sn-glycerol 3-phosphate = a 1-acyl-sn-glycero-3-phosphate + phosphate. It participates in lipid metabolism; phospholipid metabolism. Its function is as follows. Catalyzes the transfer of an acyl group from acyl-phosphate (acyl-PO(4)) to glycerol-3-phosphate (G3P) to form lysophosphatidic acid (LPA). This enzyme utilizes acyl-phosphate as fatty acyl donor, but not acyl-CoA or acyl-ACP. In Enterobacter sp. (strain 638), this protein is Glycerol-3-phosphate acyltransferase.